Consider the following 745-residue polypeptide: Polyribonucleotide nucleotidyltransferase (745 aa).

Mg(2+) contacts are provided by aspartate 487 and aspartate 493. In terms of domain architecture, KH spans 554 to 613 (PRIETMQIPTDKIRDVIGTGGKIIREIVEKTGAKINIEDTGIVKIASSDGKAIKAAYNWI). The 69-residue stretch at 623 to 691 (GTIYDGTIVK…ERGKIRLSMK (69 aa)) folds into the S1 motif domain. A disordered region spans residues 695–745 (QETGEDLTEKLKAERAERGEPEREERSDRGDRGDRGPRRDRGERRRESSGE). Residues 701 to 745 (LTEKLKAERAERGEPEREERSDRGDRGDRGPRRDRGERRRESSGE) are compositionally biased toward basic and acidic residues.

It belongs to the polyribonucleotide nucleotidyltransferase family. It depends on Mg(2+) as a cofactor.

It is found in the cytoplasm. The enzyme catalyses RNA(n+1) + phosphate = RNA(n) + a ribonucleoside 5'-diphosphate. Functionally, involved in mRNA degradation. Catalyzes the phosphorolysis of single-stranded polyribonucleotides processively in the 3'- to 5'-direction. This Methylorubrum extorquens (strain CM4 / NCIMB 13688) (Methylobacterium extorquens) protein is Polyribonucleotide nucleotidyltransferase.